Consider the following 347-residue polypeptide: Probable E3 ubiquitin-protein ligase DTX3 (347 aa).

A disordered region spans residues 111–157 (GGEHPELHRPGPPPLRAAPLLPPGARGLPPPPPPLPPPLPPRLREDA). Over residues 120–151 (PGPPPLRAAPLLPPGARGLPPPPPPLPPPLPP) the composition is skewed to pro residues. An RING-type zinc finger spans residues 164-205 (CPICLGEIQNAKTLEKCRHSFCEGCITRALQVKKACPMCGRF).

It belongs to the Deltex family. In terms of assembly, homodimer. May form a heterodimer with other members of the Deltex family. Interacts with NOTCH1. In terms of tissue distribution, strongly expressed in testis and brain. Weakly expressed in kidney.

It is found in the cytoplasm. The enzyme catalyses S-ubiquitinyl-[E2 ubiquitin-conjugating enzyme]-L-cysteine + [acceptor protein]-L-lysine = [E2 ubiquitin-conjugating enzyme]-L-cysteine + N(6)-ubiquitinyl-[acceptor protein]-L-lysine.. It functions in the pathway protein modification; protein ubiquitination. Regulator of Notch signaling, a signaling pathway involved in cell-cell communications that regulates a broad spectrum of cell-fate determinations. Probably acts both as a positive and negative regulator of Notch, depending on the developmental and cell context. Functions as a ubiquitin ligase protein in vitro, suggesting that it may regulate the Notch pathway via some ubiquitin ligase activity. The chain is Probable E3 ubiquitin-protein ligase DTX3 (Dtx3) from Mus musculus (Mouse).